The chain runs to 85 residues: Large ribosomal subunit protein bL27 (85 aa).

Residues 1–21 are disordered; that stretch reads MAHKKGASSSRNGRDSNAQRL. Over residues 7-19 the composition is skewed to polar residues; that stretch reads ASSSRNGRDSNAQ.

It belongs to the bacterial ribosomal protein bL27 family.

The chain is Large ribosomal subunit protein bL27 from Beutenbergia cavernae (strain ATCC BAA-8 / DSM 12333 / CCUG 43141 / JCM 11478 / NBRC 16432 / NCIMB 13614 / HKI 0122).